The sequence spans 341 residues: Phosphate acyltransferase (341 aa).

The protein belongs to the PlsX family. Homodimer. Probably interacts with PlsY.

The protein localises to the cytoplasm. The catalysed reaction is a fatty acyl-[ACP] + phosphate = an acyl phosphate + holo-[ACP]. The protein operates within lipid metabolism; phospholipid metabolism. Its function is as follows. Catalyzes the reversible formation of acyl-phosphate (acyl-PO(4)) from acyl-[acyl-carrier-protein] (acyl-ACP). This enzyme utilizes acyl-ACP as fatty acyl donor, but not acyl-CoA. This Vibrio campbellii (strain ATCC BAA-1116) protein is Phosphate acyltransferase.